Consider the following 122-residue polypeptide: Large ribosomal subunit protein uL14 (122 aa).

Belongs to the universal ribosomal protein uL14 family. Part of the 50S ribosomal subunit. Forms a cluster with proteins L3 and L19. In the 70S ribosome, L14 and L19 interact and together make contacts with the 16S rRNA in bridges B5 and B8.

Binds to 23S rRNA. Forms part of two intersubunit bridges in the 70S ribosome. The sequence is that of Large ribosomal subunit protein uL14 from Staphylococcus carnosus (strain TM300).